Here is a 314-residue protein sequence, read N- to C-terminus: Dihydroorotate dehydrogenase (fumarate) (314 aa).

Residues K46, 70 to 74 (NSMGL), and N130 contribute to the substrate site. 46-47 (KS) is an FMN binding site. N130 contacts FMN. Residues S132 and C133 each act as nucleophile in the active site. FMN-binding residues include K167 and I195. 196 to 197 (NS) provides a ligand contact to substrate. FMN is bound by residues G224, 252-253 (GG), and 274-275 (GT).

The protein belongs to the dihydroorotate dehydrogenase family. Type 1 subfamily. In terms of assembly, homodimer. The cofactor is FMN.

It is found in the cytoplasm. The catalysed reaction is (S)-dihydroorotate + fumarate = orotate + succinate. Its pathway is pyrimidine metabolism; UMP biosynthesis via de novo pathway. Its activity is regulated as follows. The activity is independent of the presence of oxygen. In terms of biological role, catalyzes the conversion of dihydroorotate to orotate with fumarate as the electron acceptor. This is Dihydroorotate dehydrogenase (fumarate) (URA1) from Lachancea kluyveri (strain ATCC 58438 / CBS 3082 / BCRC 21498 / NBRC 1685 / JCM 7257 / NCYC 543 / NRRL Y-12651) (Yeast).